Reading from the N-terminus, the 277-residue chain is Diaminopimelate epimerase (277 aa).

Residues Asn13, Gln46, and Asn66 each coordinate substrate. Catalysis depends on Cys75, which acts as the Proton donor. Substrate-binding positions include 76–77, Asn159, Asn192, and 210–211; these read GN and ER. The active-site Proton acceptor is Cys219. 220–221 provides a ligand contact to substrate; it reads GT.

Belongs to the diaminopimelate epimerase family. As to quaternary structure, homodimer.

It localises to the cytoplasm. The enzyme catalyses (2S,6S)-2,6-diaminopimelate = meso-2,6-diaminopimelate. It functions in the pathway amino-acid biosynthesis; L-lysine biosynthesis via DAP pathway; DL-2,6-diaminopimelate from LL-2,6-diaminopimelate: step 1/1. Catalyzes the stereoinversion of LL-2,6-diaminopimelate (L,L-DAP) to meso-diaminopimelate (meso-DAP), a precursor of L-lysine and an essential component of the bacterial peptidoglycan. The chain is Diaminopimelate epimerase from Aromatoleum aromaticum (strain DSM 19018 / LMG 30748 / EbN1) (Azoarcus sp. (strain EbN1)).